A 177-amino-acid polypeptide reads, in one-letter code: MRDHVAGRYAKALFDLALEHHVLDQAEADVRTLGEVLHATPELASVLENPSISAEELKQVLQTSFTGFNTIVLNTILVMVENDRASEVLSLPEHFIALLNEHRNVATAIVTSAYKLSDEELTNVKETFGQKSGKTLEVENVVDTNVIGGLRVQIGYTTYDGTIETKLTRLERELLKA.

This sequence belongs to the ATPase delta chain family. F-type ATPases have 2 components, F(1) - the catalytic core - and F(0) - the membrane proton channel. F(1) has five subunits: alpha(3), beta(3), gamma(1), delta(1), epsilon(1). F(0) has three main subunits: a(1), b(2) and c(10-14). The alpha and beta chains form an alternating ring which encloses part of the gamma chain. F(1) is attached to F(0) by a central stalk formed by the gamma and epsilon chains, while a peripheral stalk is formed by the delta and b chains.

It is found in the cell membrane. F(1)F(0) ATP synthase produces ATP from ADP in the presence of a proton or sodium gradient. F-type ATPases consist of two structural domains, F(1) containing the extramembraneous catalytic core and F(0) containing the membrane proton channel, linked together by a central stalk and a peripheral stalk. During catalysis, ATP synthesis in the catalytic domain of F(1) is coupled via a rotary mechanism of the central stalk subunits to proton translocation. Its function is as follows. This protein is part of the stalk that links CF(0) to CF(1). It either transmits conformational changes from CF(0) to CF(1) or is implicated in proton conduction. The sequence is that of ATP synthase subunit delta from Exiguobacterium sibiricum (strain DSM 17290 / CCUG 55495 / CIP 109462 / JCM 13490 / 255-15).